Reading from the N-terminus, the 504-residue chain is Maturase K (504 aa).

This sequence belongs to the intron maturase 2 family. MatK subfamily.

It localises to the plastid. It is found in the chloroplast. Functionally, usually encoded in the trnK tRNA gene intron. Probably assists in splicing its own and other chloroplast group II introns. In Actinidia deliciosa (Kiwi), this protein is Maturase K.